An 883-amino-acid polypeptide reads, in one-letter code: Histidine--tRNA ligase, cytoplasmic (883 aa).

This sequence belongs to the class-II aminoacyl-tRNA synthetase family.

The protein localises to the cytoplasm. Its subcellular location is the cytosol. It carries out the reaction tRNA(His) + L-histidine + ATP = L-histidyl-tRNA(His) + AMP + diphosphate + H(+). The polypeptide is Histidine--tRNA ligase, cytoplasmic (Arabidopsis thaliana (Mouse-ear cress)).